The sequence spans 498 residues: ATP synthase subunit beta, chloroplastic (498 aa).

Gly-172–Thr-179 is a binding site for ATP.

The protein belongs to the ATPase alpha/beta chains family. As to quaternary structure, F-type ATPases have 2 components, CF(1) - the catalytic core - and CF(0) - the membrane proton channel. CF(1) has five subunits: alpha(3), beta(3), gamma(1), delta(1), epsilon(1). CF(0) has four main subunits: a(1), b(1), b'(1) and c(9-12).

It localises to the plastid. It is found in the chloroplast thylakoid membrane. The catalysed reaction is ATP + H2O + 4 H(+)(in) = ADP + phosphate + 5 H(+)(out). In terms of biological role, produces ATP from ADP in the presence of a proton gradient across the membrane. The catalytic sites are hosted primarily by the beta subunits. The protein is ATP synthase subunit beta, chloroplastic of Helianthus annuus (Common sunflower).